The primary structure comprises 57 residues: UPF0391 membrane protein Atu4467 (57 aa).

2 helical membrane passes run 4 to 24 and 33 to 53; these read WALI…TGIS and ILFF…LMAG.

It belongs to the UPF0391 family.

It is found in the cell membrane. In Agrobacterium fabrum (strain C58 / ATCC 33970) (Agrobacterium tumefaciens (strain C58)), this protein is UPF0391 membrane protein Atu4467.